A 139-amino-acid polypeptide reads, in one-letter code: Large ribosomal subunit protein uL16 (139 aa).

Belongs to the universal ribosomal protein uL16 family. Part of the 50S ribosomal subunit.

Binds 23S rRNA and is also seen to make contacts with the A and possibly P site tRNAs. This chain is Large ribosomal subunit protein uL16, found in Prosthecochloris aestuarii (strain DSM 271 / SK 413).